We begin with the raw amino-acid sequence, 1244 residues long: Mitotic chromosome and X-chromosome-associated protein mix-1 (1244 aa).

32 to 39 is an ATP binding site; that stretch reads GYNGSGKS. Residues 247–355 adopt a coiled-coil conformation; the sequence is VKKSAKEIED…AKRKEHEDSK (109 aa). Over residues 337 to 355 the composition is skewed to basic and acidic residues; it reads LSKDREVLDAKRKEHEDSK. The interval 337–369 is disordered; the sequence is LSKDREVLDAKRKEHEDSKAANSKDIQSQSDDE. Residues 356 to 365 show a composition bias toward polar residues; that stretch reads AANSKDIQSQ. The stretch at 415–472 forms a coiled coil; sequence ITAAKKRGERLHNQIKHLEGEKATLSARSKSDIGSADNYQKEVDEINKQLQLLGFNID. Positions 526-654 constitute an SMC hinge domain; that stretch reads DVFGYVAHLI…DSLDVAREIA (129 aa). Coiled coils occupy residues 701-946 and 975-1037; these read PQIE…RKEA and YTVS…IATL. The span at 919 to 932 shows a compositional bias: basic and acidic residues; that stretch reads AKTKSKREEKEKEL. The tract at residues 919 to 943 is disordered; sequence AKTKSKREEKEKELTSLQQSEASNR. Residues 1216 to 1232 show a composition bias toward basic and acidic residues; the sequence is DAAAKKGAQKNDKEPPK. Positions 1216 to 1244 are disordered; sequence DAAAKKGAQKNDKEPPKKKPIVVDDDDFE.

It belongs to the SMC family. SMC2 subfamily. Component of the condensin I complex, which contains the mix-1/SMC2 and smc-4/SMC4 heterodimer, and three non SMC subunits that probably regulate the complex: dpy-26, capg-1 and dpy-28. Within the complex, interacts with smc-4, dpy-26, dpy-28 and capg-1. Interaction with smc-4 is required for mitotic chromosome localization. Component of the condensin II complex, which contains the mix-1/SMC2 and smc-4/SMC4 heterodimer, and three non SMC subunits, capg-2, kle-2 and hcp-6 that probably regulate the complex. Within the complex, interacts with smc-4, capg-2, kle-2 and hcp-6. Also a component of the condensin-like dosage compensation complex, which contains the mix-1/SMC2 and dpy-27/SMC4 heterodimer, and three non SMC subunits that probably regulate the complex: dpy-26, capg-1 and dpy-28. Within the complex, interacts with dpy-27, dpy-26, capg-1 and dpy-28. Requires capg-1 for hermaphrodite X chromosome localization. Interacts with smcl-1. In terms of tissue distribution, expressed in embryos and in adult somatic and germline tissues (at protein level).

The protein localises to the nucleus. The protein resides in the chromosome. Essential protein required for both chromosome condensation and segregation and X-chromosome dosage compensation depending on its binding partners. Central component of the condensin I complex, a complex required for conversion of interphase chromatin into mitotic-like condense chromosomes. The condensin complex introduces positive supercoils into relaxed DNA in the presence of type I topoisomerases. Converts nicked DNA into positive knotted forms in the presence of type II topoisomerases. Central component of the condensin II complex, a complex that seems to play a role in prophase chromosome condensation and organization. Both the condensin complex I and II play a role in meiotic and mitotic chromosome segregation. Plays a role in robust cytokinesis upon the presence of chromatin obstructions. Also a member of the condensin I-like dosage compensation complex that associates specifically with hermaphrodite X chromosomes to reduce their gene transcription during interphase. The sequence is that of Mitotic chromosome and X-chromosome-associated protein mix-1 (mix-1) from Caenorhabditis elegans.